Reading from the N-terminus, the 266-residue chain is Ribosomal RNA small subunit methyltransferase A (266 aa).

Asn-12, Leu-14, Gly-39, Glu-61, Asp-87, and Asn-107 together coordinate S-adenosyl-L-methionine.

The protein belongs to the class I-like SAM-binding methyltransferase superfamily. rRNA adenine N(6)-methyltransferase family. RsmA subfamily.

It is found in the cytoplasm. The enzyme catalyses adenosine(1518)/adenosine(1519) in 16S rRNA + 4 S-adenosyl-L-methionine = N(6)-dimethyladenosine(1518)/N(6)-dimethyladenosine(1519) in 16S rRNA + 4 S-adenosyl-L-homocysteine + 4 H(+). Functionally, specifically dimethylates two adjacent adenosines (A1518 and A1519) in the loop of a conserved hairpin near the 3'-end of 16S rRNA in the 30S particle. May play a critical role in biogenesis of 30S subunits. This chain is Ribosomal RNA small subunit methyltransferase A, found in Nitratidesulfovibrio vulgaris (strain DP4) (Desulfovibrio vulgaris).